Here is a 314-residue protein sequence, read N- to C-terminus: Splicing factor YJU2 (314 aa).

Positions 43, 46, 80, and 83 each coordinate Zn(2+). Disordered stretches follow at residues 178 to 238 and 253 to 314; these read MSQE…NEVP and LAGL…DSDS. Basic and acidic residues predominate over residues 200–209; it reads EEARHRRLLE. Phosphoserine occurs at positions 211, 213, and 220. Over residues 222–232 the composition is skewed to low complexity; that stretch reads PRAAARPNPTA. A compositionally biased stretch (polar residues) spans 290 to 302; that stretch reads PTPQTPGTSSLSQ. A phosphoserine mark is found at Ser-309, Ser-312, and Ser-314.

It belongs to the CWC16 family. YJU2 subfamily. In terms of assembly, component of the spliceosome. Present in the activated B complex, the catalytically activated B* complex which catalyzes the branching, the catalytic step 1 C complex catalyzing the exon ligation, and the postcatalytic P complex containing the ligated exons (mRNA) and the excised lariat intron.

Its subcellular location is the nucleus. In terms of biological role, part of the spliceosome which catalyzes two sequential transesterification reactions, first the excision of the non-coding intron from pre-mRNA and then the ligation of the coding exons to form the mature mRNA. Plays a role in stabilizing the structure of the spliceosome catalytic core and docking of the branch helix into the active site, producing 5'-exon and lariat intron-3'-intermediates. May protect cells from TP53-dependent apoptosis upon dsDNA break damage through association with PRP19-CD5L complex. This Mus musculus (Mouse) protein is Splicing factor YJU2.